Reading from the N-terminus, the 447-residue chain is D-ribitol-5-phosphate cytidylyltransferase (447 aa).

The protein belongs to the IspD/TarI cytidylyltransferase family. IspD subfamily. Homodimer.

The protein resides in the cytoplasm. The protein localises to the cytosol. The catalysed reaction is D-ribitol 5-phosphate + CTP + H(+) = CDP-L-ribitol + diphosphate. It catalyses the reaction D-ribose 5-phosphate + CTP + H(+) = CDP-D-ribose + diphosphate. The enzyme catalyses D-ribulose 5-phosphate + CTP + H(+) = CDP-D-ribulose + diphosphate. Its pathway is protein modification; protein glycosylation. Functionally, cytidylyltransferase required for protein O-linked mannosylation. Catalyzes the formation of CDP-ribitol nucleotide sugar from D-ribitol 5-phosphate. CDP-ribitol is a substrate of FKTN during the biosynthesis of the phosphorylated O-mannosyl trisaccharide (N-acetylgalactosamine-beta-3-N-acetylglucosamine-beta-4-(phosphate-6-)mannose), a carbohydrate structure present in alpha-dystroglycan (DAG1), which is required for binding laminin G-like domain-containing extracellular proteins with high affinity. Shows activity toward other pentose phosphate sugars and mediates formation of CDP-ribulose or CDP-ribose using CTP and ribulose-5-phosphate or ribose-5-phosphate, respectively. Not involved in dolichol production. The protein is D-ribitol-5-phosphate cytidylyltransferase (Crppa) of Mus musculus (Mouse).